We begin with the raw amino-acid sequence, 100 residues long: Urease subunit gamma (100 aa).

It belongs to the urease gamma subunit family. Heterotrimer of UreA (gamma), UreB (beta) and UreC (alpha) subunits. Three heterotrimers associate to form the active enzyme.

Its subcellular location is the cytoplasm. It carries out the reaction urea + 2 H2O + H(+) = hydrogencarbonate + 2 NH4(+). It functions in the pathway nitrogen metabolism; urea degradation; CO(2) and NH(3) from urea (urease route): step 1/1. The protein is Urease subunit gamma of Mycobacterium sp. (strain JLS).